The chain runs to 71 residues: Large ribosomal subunit protein bL31 (71 aa).

4 residues coordinate Zn(2+): C16, C18, C37, and C40.

It belongs to the bacterial ribosomal protein bL31 family. Type A subfamily. In terms of assembly, part of the 50S ribosomal subunit. Zn(2+) is required as a cofactor.

Its function is as follows. Binds the 23S rRNA. The chain is Large ribosomal subunit protein bL31 from Sodalis glossinidius (strain morsitans).